Reading from the N-terminus, the 123-residue chain is Probable cyclase otaY (123 aa).

It belongs to the aurE cyclase family.

Its pathway is mycotoxin biosynthesis. Functionally, probable cyclase; part of the gene cluster that mediates the biosynthesis of ochratoxin A (OTA), a mycotoxin composed of a chlorinated type I polyketide dihydroisocoumarin moiety linked to L-phenylalanine, and demonstrated to have nephrotoxic, immunotoxic, genotoxic, neurotoxic, and teratogenic properties. OtaY is probably involved in the polyketide cyclization. The pathway begins with the highly reducing polyketide synthase otaA that catalyzes the formation of the isocoumarin group during the initial stages of biosynthesis, starting from one acetate and 4 malonate units, to originate the characteristic pentaketide skeleton 7-methylmellein (7-MM) of the OTA molecule. The newly identified cyclase otaY might be involved in the polyketide cyclization reaction during the initial steps of the OTA biosynthesis. 7-MM is then oxidized into 7-carboxymellein (also called ochratoxin beta) by the cytochrome P450 monooxygenase otaC. The NRPS encoded by the otaB gene is involved in the linking of phenylalanine to the dihydroisocoumarin ring. The reaction catalyzed by NRPS results in the production of ochratoxin B (OTB), which is the non-chlorinated analog of OTA and which subsequently serves as the substrate of the halogenase otaD for chlorination activity to form the final molecular structure of OTA, containing a chlorine atom in the C-5 position of the molecule. This Aspergillus carbonarius (strain ITEM 5010) protein is Probable cyclase otaY.